The chain runs to 307 residues: Mitochondrial glycine transporter (307 aa).

Solcar repeat units follow at residues 8–87, 115–199, and 221–305; these read PRNS…MRSS, LTMY…SKQL, and TSTT…LVKR. 6 helical membrane passes run 14–39, 62–88, 121–146, 174–197, 225–251, and 280–298; these read LIGG…TRIQ, GTLP…RSSL, LLTG…VRYE, GFGA…EKSK, VNTT…KTRM, and GLSM…AWGI.

It belongs to the mitochondrial carrier (TC 2.A.29) family. SLC25A38 subfamily.

Its subcellular location is the mitochondrion. The protein resides in the mitochondrion inner membrane. It carries out the reaction glycine(in) = glycine(out). Its function is as follows. Mitochondrial glycine transporter that imports glycine into the mitochondrial matrix. Plays an important role in providing glycine for the first enzymatic step in heme biosynthesis, the condensation of glycine with succinyl-CoA to produce 5-aminolevulinate (ALA) in the mitochondrial matrix. This Saccharomyces cerevisiae (strain ATCC 204508 / S288c) (Baker's yeast) protein is Mitochondrial glycine transporter.